Consider the following 428-residue polypeptide: C4-dicarboxylate transport protein (428 aa).

9 helical membrane-spanning segments follow: residues 7 to 27 (SLYF…IVAP), 40 to 60 (FIKL…VLGI), 75 to 95 (LALL…LLIV), 143 to 163 (AFAR…GIAL), 196 to 216 (PIGA…GSLF), 221 to 241 (LMAT…GAIA), 306 to 326 (IYLT…MTLG), 329 to 349 (FTLL…TGSG), and 351 to 371 (IVLA…LALI).

The protein belongs to the dicarboxylate/amino acid:cation symporter (DAACS) (TC 2.A.23) family.

The protein resides in the cell inner membrane. In terms of biological role, responsible for the transport of dicarboxylates such as succinate, fumarate, and malate from the periplasm across the membrane. The protein is C4-dicarboxylate transport protein of Solibacter usitatus (strain Ellin6076).